We begin with the raw amino-acid sequence, 748 residues long: Sulfhydryl oxidase 1 (748 aa).

An N-terminal signal peptide occupies residues 1-32 (MRRCGRLSGPPSLLLLLLLLSPLLFSGPGAYA). Residues 33–159 (ARLSVLYSSS…RMRLIDALES (127 aa)) enclose the Thioredoxin domain. Catalysis depends on nucleophile residues cysteine 73 and cysteine 76. Cystine bridges form between cysteine 73–cysteine 76 and cysteine 104–cysteine 113. Residues asparagine 133 and asparagine 246 are each glycosylated (N-linked (GlcNAc...) asparagine). A disulfide bridge links cysteine 396 with cysteine 408. One can recognise an ERV/ALR sulfhydryl oxidase domain in the interval 399–506 (SEPHFRGFPC…EDPHFPKVQW (108 aa)). Residues arginine 404, tryptophan 411, histidine 415, aspartate 454, histidine 458, 481-488 (WTSHNRVN), lysine 503, and tryptophan 506 contribute to the FAD site. A disulfide bond links cysteine 452 and cysteine 455. Residues cysteine 512 and cysteine 515 are joined by a disulfide bond. The disordered stretch occupies residues 581–647 (GHEQAASAES…QENAPGQQHL (67 aa)). Positions 628-638 (ERMEDHQRDMQ) are enriched in basic and acidic residues. Residues 711 to 731 (ISLCVGLYSVSFMGLLAMYTY) form a helical membrane-spanning segment.

Belongs to the quiescin-sulfhydryl oxidase (QSOX) family. In terms of assembly, monomer. The cofactor is FAD. N-glycosylated. O-glycosylated on Thr and Ser residues. In terms of tissue distribution, detected in skin (at protein level). Expressed in the seminal vesicles and skin.

Its subcellular location is the golgi apparatus membrane. It localises to the secreted. It catalyses the reaction 2 R'C(R)SH + O2 = R'C(R)S-S(R)CR' + H2O2. Its function is as follows. Catalyzes the oxidation of sulfhydryl groups in peptide and protein thiols to disulfides with the reduction of oxygen to hydrogen peroxide. Plays a role in disulfide bond formation in a variety of extracellular proteins. In fibroblasts, required for normal incorporation of laminin into the extracellular matrix, and thereby for normal cell-cell adhesion and cell migration. The polypeptide is Sulfhydryl oxidase 1 (Qsox1) (Mus musculus (Mouse)).